A 134-amino-acid polypeptide reads, in one-letter code: TSC22 domain family protein 3 (134 aa).

The residue at position 1 (Met-1) is an N-acetylmethionine. Positions Met-1–Leu-60 are AP1-binding. Ala-42 and Val-73 each carry phosphoserine. The segment at Leu-76–Leu-97 is leucine-zipper. Ser-102 is modified (phosphoserine). A disordered region spans residues Lys-108–Val-134.

It belongs to the TSC-22/Dip/Bun family. Can form homodimers, however it is likely to function as a monomer. Interacts with NFKB1. Interacts (via N-terminus) with JUN and FOS; these interactions inhibit the binding of active AP1 to its target DNA. In terms of assembly, interacts with MYOD1. Interacts with HDAC1; this interaction affects HDAC1 activity on MYOG promoter and thus inhibits MYOD1 transcriptional activity. As to expression, ubiquitously expressed, including in the fetal brain and liver. Expressed in brain, lung, spleen and skeletal muscle. Lower levels detected in heart and kidney. Not detected in the pancreas. In non-lymphoid tissues, in the absence of inflammation, the major source of constitutive expression is the macrophage lineage. Also expressed in cells from different hemopoietic cell lineages, including bone marrow cells, CD34+ stem cells, mature B- and T-cells, monocytes and granulocytes. Down-regulated in activated macrophages from inflammatory lesions of delayed-type hypersensitivity (DTH) reactions, such as in tuberculosis and in Crohn disease, whereas in Burkitt lymphoma, persists in macrophages involved in the phagocytosis of apoptotic malignant cells.

The protein localises to the cytoplasm. It is found in the nucleus. In terms of biological role, protects T-cells from IL2 deprivation-induced apoptosis through the inhibition of FOXO3A transcriptional activity that leads to the down-regulation of the pro-apoptotic factor BCL2L11. In macrophages, plays a role in the anti-inflammatory and immunosuppressive effects of glucocorticoids and IL10. In T-cells, inhibits anti-CD3-induced NFKB1 nuclear translocation and thereby NFKB1 DNA-binding activities. In vitro, suppresses AP-1 transcription factor complex DNA-binding activities. Its function is as follows. Inhibits myogenic differentiation and mediates anti-myogenic effects of glucocorticoids by binding and regulating MYOD1 and HDAC1 transcriptional activity resulting in reduced expression of MYOG. This is TSC22 domain family protein 3 from Homo sapiens (Human).